Reading from the N-terminus, the 252-residue chain is Uridylate kinase (252 aa).

ATP is bound at residue 24 to 27 (KLSG). The interval 32 to 37 (GEEGFG) is involved in allosteric activation by GTP. Glycine 66 contacts UMP. Positions 67 and 71 each coordinate ATP. Residues aspartate 86 and 147-154 (TGNPFFTT) contribute to the UMP site. The ATP site is built by threonine 174, tyrosine 180, and aspartate 183.

This sequence belongs to the UMP kinase family. As to quaternary structure, homohexamer.

The protein resides in the cytoplasm. It catalyses the reaction UMP + ATP = UDP + ADP. The protein operates within pyrimidine metabolism; CTP biosynthesis via de novo pathway; UDP from UMP (UMPK route): step 1/1. Its activity is regulated as follows. Allosterically activated by GTP. Inhibited by UTP. In terms of biological role, catalyzes the reversible phosphorylation of UMP to UDP. This Alcanivorax borkumensis (strain ATCC 700651 / DSM 11573 / NCIMB 13689 / SK2) protein is Uridylate kinase.